The chain runs to 133 residues: Small ribosomal subunit protein uS11 (133 aa).

This sequence belongs to the universal ribosomal protein uS11 family. Part of the 30S ribosomal subunit. Interacts with proteins S7 and S18. Binds to IF-3.

Located on the platform of the 30S subunit, it bridges several disparate RNA helices of the 16S rRNA. Forms part of the Shine-Dalgarno cleft in the 70S ribosome. The protein is Small ribosomal subunit protein uS11 of Bordetella avium (strain 197N).